The sequence spans 998 residues: tRNA (34-2'-O)-methyltransferase regulator WDR6 (998 aa).

11 WD repeats span residues 148-185, 200-239, 250-291, 294-333, 476-515, 527-566, 567-608, 664-704, 779-821, 826-865, and 868-911; these read LYYTKLHGSSFNKLAIISGNAFGELLVWQTQFPTESDP, AHNGVIHSIEFDLQSQLLVTTSDDRSVKFWNIQKSGDWTT, GHSS…ILKR, QFGAPIWRLGFSQDAEILYSTSSTGNLVGQNLKEVLNRPK, NNREPWITAALLISEQYLLLGNREGHVMLYCRSSASDDFQ, MGSNFFKLLSLNADNAHVMSGGHEAFLKYLSVRFSDSTLR, VSQR…LLQL, RNCN…LSQR, ARLM…QLDL, DIQRCPLGIQWIASKGMLLVSTTNGEVYGFDRTLETTYFQ, and LHVT…VEQK.

Belongs to the WD repeat WDR6 family. As to quaternary structure, interacts with Trm7-34.

It is found in the cytoplasm. Functionally, together with methyltransferase Trm7-34, methylates the 2'-O-ribose of nucleotides at position 34 of the anticodon loop of substrate tRNAs. This chain is tRNA (34-2'-O)-methyltransferase regulator WDR6, found in Drosophila melanogaster (Fruit fly).